Here is a 480-residue protein sequence, read N- to C-terminus: Altronate oxidoreductase (480 aa).

19–30 contacts NAD(+); that stretch reads ILQFGEGNFLRG.

This sequence belongs to the mannitol dehydrogenase family. UxaB subfamily.

It carries out the reaction D-altronate + NAD(+) = keto-D-tagaturonate + NADH + H(+). It participates in carbohydrate metabolism; pentose and glucuronate interconversion. This is Altronate oxidoreductase from Bacillus subtilis (strain 168).